Reading from the N-terminus, the 786-residue chain is Protein translocase subunit SecA 1 (786 aa).

ATP is bound by residues glutamine 85, 103–107 (GEGKT), and aspartate 491.

It belongs to the SecA family. As to quaternary structure, monomer and homodimer. Part of the essential Sec protein translocation apparatus which comprises SecA, SecYEG and auxiliary proteins SecDF. Other proteins may also be involved.

It is found in the cell membrane. It localises to the cytoplasm. The enzyme catalyses ATP + H2O + cellular proteinSide 1 = ADP + phosphate + cellular proteinSide 2.. Its function is as follows. Part of the Sec protein translocase complex. Interacts with the SecYEG preprotein conducting channel. Has a central role in coupling the hydrolysis of ATP to the transfer of proteins into and across the cell membrane, serving as an ATP-driven molecular motor driving the stepwise translocation of polypeptide chains across the membrane. The chain is Protein translocase subunit SecA 1 from Pediococcus pentosaceus (strain ATCC 25745 / CCUG 21536 / LMG 10740 / 183-1w).